A 398-amino-acid chain; its full sequence is 1,4-beta-D-glucan cellobiohydrolase CEL6C (398 aa).

The N-terminal stretch at 1-18 (MKITSSAAALALVASAVA) is a signal peptide. N-linked (GlcNAc...) asparagine glycosylation is present at Asn-70. Residue Asp-125 is part of the active site. Asp-170 acts as the Proton donor in catalysis. Substrate contacts are provided by Trp-218, Trp-318, Lys-346, and Glu-350.

Belongs to the glycosyl hydrolase 6 (cellulase B) family. Both N- and O-glycosylated.

The protein localises to the secreted. The enzyme catalyses Hydrolysis of (1-&gt;4)-beta-D-glucosidic linkages in cellulose and cellotetraose, releasing cellobiose from the non-reducing ends of the chains.. Functionally, exoglucanase that plays an important function in biomass degradation by catalyzing the hydrolysis of the non-reducing end beta-1,4-glucosidic linkages in cellulose and cellotetraose to release cellobiose. Hydrolyzes crystalline and amorphous cellulose but is inactive on hydroxyethyl cellulose, mannan, galactomannan, xyloglucan, arabinoxylan, arabinan, xylan, and pectin. This Podospora anserina (strain S / ATCC MYA-4624 / DSM 980 / FGSC 10383) (Pleurage anserina) protein is 1,4-beta-D-glucan cellobiohydrolase CEL6C.